A 221-amino-acid chain; its full sequence is Cytochrome c biogenesis ATP-binding export protein CcmA (221 aa).

Residues 14–221 form the ABC transporter domain; it reads LACHDVSCLR…FDLLDESHFS (208 aa). 46–53 contacts ATP; the sequence is GANGIGKS.

This sequence belongs to the ABC transporter superfamily. CcmA exporter (TC 3.A.1.107) family. As to quaternary structure, the complex is composed of two ATP-binding proteins (CcmA) and two transmembrane proteins (CcmB).

It is found in the cell inner membrane. It carries out the reaction heme b(in) + ATP + H2O = heme b(out) + ADP + phosphate + H(+). Functionally, part of the ABC transporter complex CcmAB involved in the biogenesis of c-type cytochromes; once thought to export heme, this seems not to be the case, but its exact role is uncertain. Responsible for energy coupling to the transport system. The chain is Cytochrome c biogenesis ATP-binding export protein CcmA from Zymomonas mobilis subsp. mobilis (strain ATCC 31821 / ZM4 / CP4).